The primary structure comprises 118 residues: Small ribosomal subunit protein uS13 (118 aa).

The segment at 91–118 (HRRGLPVRGQRTKTNARTRKGPRKPIKK) is disordered.

This sequence belongs to the universal ribosomal protein uS13 family. As to quaternary structure, part of the 30S ribosomal subunit. Forms a loose heterodimer with protein S19. Forms two bridges to the 50S subunit in the 70S ribosome.

Functionally, located at the top of the head of the 30S subunit, it contacts several helices of the 16S rRNA. In the 70S ribosome it contacts the 23S rRNA (bridge B1a) and protein L5 of the 50S subunit (bridge B1b), connecting the 2 subunits; these bridges are implicated in subunit movement. Contacts the tRNAs in the A and P-sites. The polypeptide is Small ribosomal subunit protein uS13 (Pectobacterium atrosepticum (strain SCRI 1043 / ATCC BAA-672) (Erwinia carotovora subsp. atroseptica)).